Here is a 57-residue protein sequence, read N- to C-terminus: Potassium channel toxin alpha-KTx 23.3 (57 aa).

An N-terminal signal peptide occupies residues 1-23; the sequence is MKMSIVIILLLFTCLIATNGASG. Disulfide bonds link C26/C46, C32/C51, C36/C53, and C41/C56.

Belongs to the short scorpion toxin superfamily. Potassium channel inhibitor family. Alpha-KTx 23 subfamily. In terms of tissue distribution, expressed by the venom gland.

Its subcellular location is the secreted. Its function is as follows. This toxin shows both immunosuppressive and anti-inflammatory activities. It has the potential to inhibit human T cell activation, since it reduces IL-2 secretion and the expression of T cell activation marker CD69 and acts as an anti-inflammatory agent, since it provokes the reduction of secretion of both IFN-gamma and TNF-alpha. In vivo, the delayed-type hypersensitivity response in rat autoimmune disease model is ameliorated in the presence of this toxin. Acts by blocking Kv1.3/KCNA3 potassium channels of T-lymphocytes. The sequence is that of Potassium channel toxin alpha-KTx 23.3 from Scorpiops tibetanus (Scorpion).